The sequence spans 473 residues: UDP-N-acetylmuramate--L-alanine ligase (473 aa).

122 to 128 (GTHGKTT) provides a ligand contact to ATP.

This sequence belongs to the MurCDEF family.

Its subcellular location is the cytoplasm. It carries out the reaction UDP-N-acetyl-alpha-D-muramate + L-alanine + ATP = UDP-N-acetyl-alpha-D-muramoyl-L-alanine + ADP + phosphate + H(+). Its pathway is cell wall biogenesis; peptidoglycan biosynthesis. Its function is as follows. Cell wall formation. This chain is UDP-N-acetylmuramate--L-alanine ligase, found in Teredinibacter turnerae (strain ATCC 39867 / T7901).